The sequence spans 151 residues: NADPH-dependent 7-cyano-7-deazaguanine reductase (151 aa).

The active-site Thioimide intermediate is Cys-49. The active-site Proton donor is Asp-56. Substrate is bound by residues 71-73 and 90-91; these read IES and HE.

It belongs to the GTP cyclohydrolase I family. QueF type 1 subfamily.

The protein localises to the cytoplasm. The enzyme catalyses 7-aminomethyl-7-carbaguanine + 2 NADP(+) = 7-cyano-7-deazaguanine + 2 NADPH + 3 H(+). The protein operates within tRNA modification; tRNA-queuosine biosynthesis. Catalyzes the NADPH-dependent reduction of 7-cyano-7-deazaguanine (preQ0) to 7-aminomethyl-7-deazaguanine (preQ1). In Caulobacter vibrioides (strain ATCC 19089 / CIP 103742 / CB 15) (Caulobacter crescentus), this protein is NADPH-dependent 7-cyano-7-deazaguanine reductase.